A 284-amino-acid chain; its full sequence is Efem/EfeO family lipoprotein (284 aa).

Residues Met1–Ala17 form the signal peptide. Cys18 carries the N-palmitoyl cysteine lipid modification. A lipid anchor (S-diacylglycerol cysteine) is attached at Cys18.

The protein belongs to the EfeM/EfeO family.

It localises to the cell membrane. The chain is Efem/EfeO family lipoprotein from Staphylococcus aureus (strain USA300).